A 241-amino-acid chain; its full sequence is ATP synthase subunit a (241 aa).

5 helical membrane passes run Gly30 to Gly50, Phe91 to Trp111, Ile128 to Ser148, Leu193 to Leu213, and Gly214 to Gly234.

It belongs to the ATPase A chain family. As to quaternary structure, F-type ATPases have 2 components, CF(1) - the catalytic core - and CF(0) - the membrane proton channel. CF(1) has five subunits: alpha(3), beta(3), gamma(1), delta(1), epsilon(1). CF(0) has four main subunits: a, b, b' and c.

The protein localises to the cellular thylakoid membrane. Key component of the proton channel; it plays a direct role in the translocation of protons across the membrane. This Prochlorococcus marinus (strain MIT 9215) protein is ATP synthase subunit a.